A 421-amino-acid polypeptide reads, in one-letter code: Histidine--tRNA ligase (421 aa).

Belongs to the class-II aminoacyl-tRNA synthetase family. In terms of assembly, homodimer.

The protein resides in the cytoplasm. It carries out the reaction tRNA(His) + L-histidine + ATP = L-histidyl-tRNA(His) + AMP + diphosphate + H(+). This is Histidine--tRNA ligase from Nitrosomonas eutropha (strain DSM 101675 / C91 / Nm57).